A 336-amino-acid polypeptide reads, in one-letter code: tRNA N6-adenosine threonylcarbamoyltransferase (336 aa).

Residues histidine 114 and histidine 118 each coordinate Fe cation. Residues 136–140 (LVSGG), aspartate 169, glycine 182, aspartate 186, and asparagine 275 each bind substrate. Fe cation is bound at residue aspartate 301.

Belongs to the KAE1 / TsaD family. Fe(2+) is required as a cofactor.

The protein localises to the cytoplasm. The enzyme catalyses L-threonylcarbamoyladenylate + adenosine(37) in tRNA = N(6)-L-threonylcarbamoyladenosine(37) in tRNA + AMP + H(+). Its function is as follows. Required for the formation of a threonylcarbamoyl group on adenosine at position 37 (t(6)A37) in tRNAs that read codons beginning with adenine. Is involved in the transfer of the threonylcarbamoyl moiety of threonylcarbamoyl-AMP (TC-AMP) to the N6 group of A37, together with TsaE and TsaB. TsaD likely plays a direct catalytic role in this reaction. The polypeptide is tRNA N6-adenosine threonylcarbamoyltransferase (Streptococcus pneumoniae (strain Hungary19A-6)).